A 363-amino-acid chain; its full sequence is 3-isopropylmalate dehydrogenase (363 aa).

Position 78 to 91 (78 to 91 (GKKWDTLPINERPE)) interacts with NAD(+). Substrate is bound by residues R99, R109, R138, and D227. D227, D251, and D255 together coordinate Mg(2+). 285–297 (GSAPDIQGKNIAN) lines the NAD(+) pocket.

The protein belongs to the isocitrate and isopropylmalate dehydrogenases family. LeuB type 1 subfamily. Homodimer. Requires Mg(2+) as cofactor. It depends on Mn(2+) as a cofactor.

Its subcellular location is the cytoplasm. The catalysed reaction is (2R,3S)-3-isopropylmalate + NAD(+) = 4-methyl-2-oxopentanoate + CO2 + NADH. The protein operates within amino-acid biosynthesis; L-leucine biosynthesis; L-leucine from 3-methyl-2-oxobutanoate: step 3/4. Its function is as follows. Catalyzes the oxidation of 3-carboxy-2-hydroxy-4-methylpentanoate (3-isopropylmalate) to 3-carboxy-4-methyl-2-oxopentanoate. The product decarboxylates to 4-methyl-2 oxopentanoate. This chain is 3-isopropylmalate dehydrogenase, found in Buchnera aphidicola subsp. Diuraphis noxia.